A 155-amino-acid polypeptide reads, in one-letter code: Large ribosomal subunit protein uL13 (155 aa).

Belongs to the universal ribosomal protein uL13 family. As to quaternary structure, part of the 50S ribosomal subunit.

In terms of biological role, this protein is one of the early assembly proteins of the 50S ribosomal subunit, although it is not seen to bind rRNA by itself. It is important during the early stages of 50S assembly. This chain is Large ribosomal subunit protein uL13, found in Rickettsia typhi (strain ATCC VR-144 / Wilmington).